A 428-amino-acid polypeptide reads, in one-letter code: GTPase Obg (428 aa).

Residues 1–158 form the Obg domain; sequence MFVDQTKIDV…RTLRLELKVL (158 aa). An OBG-type G domain is found at 159–328; sequence ADVGLVGFPS…LMGKTADLVE (170 aa). GTP-binding positions include 165–172, 190–194, 212–215, 282–285, and 309–311; these read GFPSVGKS, FTTLT, DLPG, TQMD, and SSV. Positions 172 and 192 each coordinate Mg(2+). Residues 350–428 form the OCT domain; the sequence is YKKPEDEGFK…IADFTFEFVD (79 aa).

This sequence belongs to the TRAFAC class OBG-HflX-like GTPase superfamily. OBG GTPase family. As to quaternary structure, monomer. The cofactor is Mg(2+).

It localises to the cytoplasm. An essential GTPase which binds GTP, GDP and possibly (p)ppGpp with moderate affinity, with high nucleotide exchange rates and a fairly low GTP hydrolysis rate. Plays a role in control of the cell cycle, stress response, ribosome biogenesis and in those bacteria that undergo differentiation, in morphogenesis control. The chain is GTPase Obg from Lactobacillus johnsonii (strain CNCM I-12250 / La1 / NCC 533).